Here is a 344-residue protein sequence, read N- to C-terminus: G-protein coupled receptor str-217 (344 aa).

Over 1–10 (MLLFQKTLSR) the chain is Extracellular. The helical transmembrane segment at 11 to 31 (VAAPISVAANLILILLIIFKS) threads the bilayer. Over 32-39 (PAQMGNYK) the chain is Cytoplasmic. The helical transmembrane segment at 40–60 (YLLIGLSIFEMSYAVLDVVSE) threads the bilayer. Topologically, residues 61–88 (TTVLSIKKSFVVVVPYKDRSFGQETAMD) are extracellular. A helical membrane pass occupies residues 89 to 109 (INLIYCGFFGFSMGMFVVIFA). Over 110–128 (YRSFLTTGNTILRKFEGFK) the chain is Cytoplasmic. Residues 129–149 (IISWFAYPLFYAIVWILVAWG) form a helical membrane-spanning segment. Residues 150–195 (PLASFPEMDIVVRPFLLDELNMTVDEVAYTGRLFYSTIDNSLRYSA) lie on the Extracellular side of the membrane. N-linked (GlcNAc...) asparagine glycosylation occurs at asparagine 170. The chain crosses the membrane as a helical span at residues 196 to 216 (ILTGVLQWVLTASSLFLVIFF). The Cytoplasmic portion of the chain corresponds to 217 to 256 (GLRCYFHYGKLVQLTDVQSIRLRQLQNQLFLALVCQATVP). Residues 257–277 (LILMHIPVTILYTCCVLNIVF) form a helical membrane-spanning segment. At 278 to 279 (NP) the chain is on the extracellular side. The chain crosses the membrane as a helical span at residues 280-300 (FSVATTIALFPAIDPLPTIFI). Over 301–344 (VKNYRVALFEFVCPSCLCWSETLKHMGSNRITSYRSNTVNALSM) the chain is Cytoplasmic.

This sequence belongs to the nematode receptor-like protein str family. In terms of tissue distribution, expressed in the ADL chemosensory neurons.

Its subcellular location is the cell membrane. Its function is as follows. Probable G-protein coupled receptor. In Caenorhabditis elegans, this protein is G-protein coupled receptor str-217.